Reading from the N-terminus, the 666-residue chain is ATP-dependent RNA helicase MSS116, mitochondrial (666 aa).

The N-terminal 22 residues, 1 to 22 (MLRHCSLGLVTTQISAIAPLRL), are a transit peptide targeting the mitochondrion. Basic and acidic residues predominate over residues 38-60 (RDRRSSRSREDKPYNSRTRRFDD). The disordered stretch occupies residues 38–131 (RDRRSSRSRE…KSYSKGGNTS (94 aa)). Over residues 120 to 131 (NTKSYSKGGNTS) the composition is skewed to polar residues. The Q motif signature appears at 159–187 (SLLEKNVISRDLYDSISRMGFEQLTPVQQ). The Helicase ATP-binding domain occupies 192-379 (PIITNSDSDI…NDIMNKEECL (188 aa)). 205-212 (AKTGTGKT) lines the ATP pocket. The DEAD box signature appears at 320 to 323 (DEAD). The Helicase C-terminal domain maps to 408–560 (NLYAAIEHIR…NIRKFEAQPH (153 aa)).

The protein belongs to the DEAD box helicase family. DDX18/HAS1 subfamily.

The protein resides in the mitochondrion matrix. The enzyme catalyses ATP + H2O = ADP + phosphate + H(+). Its function is as follows. ATP-dependent RNA helicase required for mitochondrial splicing of group I and II introns. Also required for efficient mitochondrial translation. This is ATP-dependent RNA helicase MSS116, mitochondrial (MSS116) from Candida glabrata (strain ATCC 2001 / BCRC 20586 / JCM 3761 / NBRC 0622 / NRRL Y-65 / CBS 138) (Yeast).